The chain runs to 356 residues: NADH-quinone oxidoreductase subunit H (356 aa).

Helical transmembrane passes span I18–I38, G87–I107, V120–G140, I166–V186, W202–V222, L257–F277, W292–M312, and F333–I353.

Belongs to the complex I subunit 1 family. As to quaternary structure, NDH-1 is composed of 14 different subunits. Subunits NuoA, H, J, K, L, M, N constitute the membrane sector of the complex.

Its subcellular location is the cell inner membrane. It carries out the reaction a quinone + NADH + 5 H(+)(in) = a quinol + NAD(+) + 4 H(+)(out). Its function is as follows. NDH-1 shuttles electrons from NADH, via FMN and iron-sulfur (Fe-S) centers, to quinones in the respiratory chain. The immediate electron acceptor for the enzyme in this species is believed to be ubiquinone. Couples the redox reaction to proton translocation (for every two electrons transferred, four hydrogen ions are translocated across the cytoplasmic membrane), and thus conserves the redox energy in a proton gradient. This subunit may bind ubiquinone. In Nitrobacter winogradskyi (strain ATCC 25391 / DSM 10237 / CIP 104748 / NCIMB 11846 / Nb-255), this protein is NADH-quinone oxidoreductase subunit H.